Consider the following 570-residue polypeptide: Sulfite reductase [NADPH] hemoprotein beta-component (570 aa).

4 residues coordinate [4Fe-4S] cluster: cysteine 434, cysteine 440, cysteine 479, and cysteine 483. Cysteine 483 contributes to the siroheme binding site.

This sequence belongs to the nitrite and sulfite reductase 4Fe-4S domain family. In terms of assembly, alpha(8)-beta(8). The alpha component is a flavoprotein, the beta component is a hemoprotein. Siroheme is required as a cofactor. [4Fe-4S] cluster serves as cofactor.

The enzyme catalyses hydrogen sulfide + 3 NADP(+) + 3 H2O = sulfite + 3 NADPH + 4 H(+). The protein operates within sulfur metabolism; hydrogen sulfide biosynthesis; hydrogen sulfide from sulfite (NADPH route): step 1/1. Component of the sulfite reductase complex that catalyzes the 6-electron reduction of sulfite to sulfide. This is one of several activities required for the biosynthesis of L-cysteine from sulfate. The polypeptide is Sulfite reductase [NADPH] hemoprotein beta-component (Salmonella gallinarum (strain 287/91 / NCTC 13346)).